The primary structure comprises 2559 residues: Stabilin-2 (2559 aa).

Residues 1-28 (MARSKLLLGKLLPLILIFLGLLVQNACS) form the signal peptide. Over 29–2464 (PTEAPELTKR…PPTAATAAHS (2436 aa)) the chain is Extracellular. Asparagine 71 carries an N-linked (GlcNAc...) asparagine glycan. EGF-like domains follow at residues 116 to 156 (DCME…TACE), 164 to 201 (FGPN…PRCD), 203 to 244 (PIPE…QTCK), 245 to 284 (PINP…QVCL), and 330 to 370 (MTDI…LNCY). Intrachain disulfides connect cysteine 120/cysteine 134, cysteine 128/cysteine 144, and cysteine 146/cysteine 155. The N-linked (GlcNAc...) asparagine glycan is linked to asparagine 167. 12 disulfide bridges follow: cysteine 168–cysteine 179, cysteine 172–cysteine 189, cysteine 191–cysteine 200, cysteine 207–cysteine 218, cysteine 212–cysteine 230, cysteine 232–cysteine 243, cysteine 249–cysteine 260, cysteine 254–cysteine 270, cysteine 272–cysteine 283, cysteine 334–cysteine 346, cysteine 340–cysteine 356, and cysteine 358–cysteine 369. N-linked (GlcNAc...) asparagine glycosylation occurs at asparagine 345. FAS1 domains follow at residues 379-512 (ELNT…DRAM) and 522-659 (NPQQ…TGVL). Residues asparagine 572, asparagine 626, asparagine 673, and asparagine 691 are each glycosylated (N-linked (GlcNAc...) asparagine). The 41-residue stretch at 743–783 (DCNPCPGGFMNPCSGNGQCIDGLGGNGTCICEDGFQGSRCQ) folds into the EGF-like 6 domain. Disulfide bonds link cysteine 747–cysteine 761, cysteine 755–cysteine 771, and cysteine 773–cysteine 782. A glycan (N-linked (GlcNAc...) asparagine) is linked at asparagine 768. The N-linked (GlcNAc...) asparagine glycan is linked to asparagine 796. EGF-like domains lie at 833–873 (QTSA…TLCS), 874–917 (KKDP…RDCV), 918–960 (EINS…IDCE), and 961–1002 (PIIS…VLCY). Intrachain disulfides connect cysteine 837-cysteine 850, cysteine 844-cysteine 859, cysteine 861-cysteine 872, cysteine 878-cysteine 893, cysteine 887-cysteine 903, cysteine 905-cysteine 916, cysteine 922-cysteine 936, cysteine 930-cysteine 946, cysteine 948-cysteine 959, cysteine 965-cysteine 978, cysteine 972-cysteine 988, and cysteine 990-cysteine 1001. Asparagine 854 is a glycosylation site (N-linked (GlcNAc...) asparagine). A glycan (N-linked (GlcNAc...) asparagine) is linked at asparagine 933. FAS1 domains follow at residues 1002–1135 (YGNV…NKVL) and 1145–1273 (LPSL…EKVL). N-linked (GlcNAc...) asparagine glycosylation is found at asparagine 1024, asparagine 1036, asparagine 1108, asparagine 1255, and asparagine 1283. Positions 1350 to 1415 (PQCQACPGKG…CSCVHGRCNQ (66 aa)) constitute a Laminin EGF-like 1 domain. Intrachain disulfides connect cysteine 1355/cysteine 1369, cysteine 1363/cysteine 1379, cysteine 1381/cysteine 1390, cysteine 1402/cysteine 1413, cysteine 1406/cysteine 1423, cysteine 1425/cysteine 1434, cysteine 1443/cysteine 1453, cysteine 1447/cysteine 1463, cysteine 1465/cysteine 1476, cysteine 1482/cysteine 1495, cysteine 1489/cysteine 1505, cysteine 1507/cysteine 1518, cysteine 1524/cysteine 1537, cysteine 1531/cysteine 1547, cysteine 1549/cysteine 1560, cysteine 1566/cysteine 1579, cysteine 1573/cysteine 1589, and cysteine 1591/cysteine 1602. Residues asparagine 1374 and asparagine 1386 are each glycosylated (N-linked (GlcNAc...) asparagine). 4 consecutive EGF-like domains span residues 1439–1477 (TTDN…TVCT), 1478–1519 (AINA…IVCL), 1520–1561 (EINP…KVCT), and 1562–1603 (LINV…IVCR). Asparagine 1444 carries N-linked (GlcNAc...) asparagine glycosylation. Asparagine 1472 carries an N-linked (GlcNAc...) asparagine glycan. Asparagine 1580 is a glycosylation site (N-linked (GlcNAc...) asparagine). FAS1 domains are found at residues 1603–1731 (RGSI…DTLL) and 1747–1888 (VLLN…DCLL). Asparagine 1750 carries N-linked (GlcNAc...) asparagine glycosylation. A Laminin EGF-like 2 domain is found at 1965-2030 (PDCQACPGGP…GCSEHGQCDE (66 aa)). Disulfide bonds link cysteine 1970–cysteine 1984, cysteine 1978–cysteine 1994, cysteine 1996–cysteine 2005, cysteine 2017–cysteine 2028, cysteine 2022–cysteine 2038, cysteine 2040–cysteine 2049, cysteine 2059–cysteine 2069, cysteine 2063–cysteine 2075, cysteine 2077–cysteine 2088, cysteine 2094–cysteine 2107, cysteine 2101–cysteine 2116, cysteine 2118–cysteine 2129, cysteine 2135–cysteine 2149, cysteine 2143–cysteine 2159, cysteine 2161–cysteine 2172, cysteine 2228–cysteine 2296, and cysteine 2252–cysteine 2273. The N-linked (GlcNAc...) asparagine glycan is linked to asparagine 2001. EGF-like domains lie at 2055-2089 (VIPV…ITCT), 2090-2130 (VVDF…HSCT), and 2131-2173 (EIDP…RDCE). The N-linked (GlcNAc...) asparagine glycan is linked to asparagine 2072. The Link domain maps to 2206–2298 (GVFHLRSPLG…SEMWDVFCYR (93 aa)). Residues asparagine 2287, asparagine 2303, asparagine 2375, asparagine 2391, and asparagine 2400 are each glycosylated (N-linked (GlcNAc...) asparagine). The FAS1 7 domain maps to 2318–2452 (NGNLLQVLMS…GVLHIISEPL (135 aa)). The helical transmembrane segment at 2465–2485 (GLGTGIFCAVVLVTGAIALAA) threads the bilayer. Residues 2486–2559 (YSYFRLNQRT…NSDPLGALRS (74 aa)) are Cytoplasmic-facing. Serine 2503 is modified (phosphoserine). An interaction with TMSB4X region spans residues 2510-2520 (LAFGKQQPESI). The interval 2514–2559 (KQQPESITNPLYETSTPAAPEPSCDPFTDSGERELENSDPLGALRS) is disordered. Positions 2516 to 2530 (QPESITNPLYETSTP) are enriched in polar residues.

As to quaternary structure, interacts with heparin, alpha-M/beta-2 integrin (ITGAM and ITGB2), and thymosin beta 4 (TMSB4X). Interacts with GULP1. Associates with clathrin and adapter protein AP-2; in liver sinusoidal endothelial cells (LSECs). Glycosylated. Post-translationally, proteolytically processed to yield a smaller protein. In terms of tissue distribution, expressed in endothelial sinuses of liver, lymph nodes, bone marrow, spleen and in specialised structures of eye, heart, brain and kidney. Expression is detected in corneal and lens epithelium, in mesenchymal cells of the heart valves, in the ependymal cells lining the ventricles in the brain, and in the prismatic epithelial cells covering the renal papillae.

The protein resides in the cytoplasm. The protein localises to the cell membrane. Its function is as follows. Phosphatidylserine receptor that enhances the engulfment of apoptotic cells. Hyaluronan receptor that binds to and mediates endocytosis of hyaluronic acid (HA). Also acts, in different species, as a primary systemic scavenger receptor for heparin (Hep), chondroitin sulfate (CS), dermatan sulfate (DS), nonglycosaminoglycan (GAG), acetylated low-density lipoprotein (AcLDL), pro-collagen propeptides and advanced glycation end products (AGE). May serve to maintain tissue integrity by supporting extracellular matrix turnover or it may contribute to maintaining fluidity of bodily liquids by resorption of hyaluronan. Counter receptor which plays an important role in lymphocyte recruitment in the hepatic vasculature. Binds to both Gram-positive and Gram-negative bacteria and may play a role in defense against bacterial infection. The proteolytically processed short form also functions as an endocytosis receptor for heparin internalization as well as HA and CS. The chain is Stabilin-2 from Mus musculus (Mouse).